The chain runs to 49 residues: MRVNITLACTECGDRNYISKKNKRNNAERIELKKYCKRDKKSTLHRETK.

It belongs to the bacterial ribosomal protein bL33 family.

This chain is Large ribosomal subunit protein bL33B, found in Bacillus anthracis.